Reading from the N-terminus, the 188-residue chain is MKVIASSIRKGNVIEQDGKLYVVVTAENIHPGKGTPVSQIEMRRISDGVKISERYKTTDQVEKVTIEERNYTYLYEDPDGFHFMNPETYDQVLVPKDVVGSQAAYLQENMTVKLSMHDVVPVSIALPQRVTLEVVDTEPVTKGQTASSSYKPAVLSNGVRTGVPPHITVGTRIVVMTEDGSYCERAKD.

Belongs to the elongation factor P family.

It is found in the cytoplasm. Its pathway is protein biosynthesis; polypeptide chain elongation. Involved in peptide bond synthesis. Stimulates efficient translation and peptide-bond synthesis on native or reconstituted 70S ribosomes in vitro. Probably functions indirectly by altering the affinity of the ribosome for aminoacyl-tRNA, thus increasing their reactivity as acceptors for peptidyl transferase. The polypeptide is Elongation factor P (Bradyrhizobium sp. (strain BTAi1 / ATCC BAA-1182)).